The primary structure comprises 332 residues: Protoheme IX farnesyltransferase (332 aa).

Transmembrane regions (helical) follow at residues 63 to 83, 109 to 129, 132 to 152, 160 to 180, 188 to 208, 245 to 265, and 286 to 306; these read LICT…LNCL, TVFL…ISGV, LAAG…TIIL, IVFG…AATG, WLFG…AILL, ILGV…LLPF, and AKGL…LLLI.

This sequence belongs to the UbiA prenyltransferase family. Protoheme IX farnesyltransferase subfamily.

It localises to the cell inner membrane. The catalysed reaction is heme b + (2E,6E)-farnesyl diphosphate + H2O = Fe(II)-heme o + diphosphate. It participates in porphyrin-containing compound metabolism; heme O biosynthesis; heme O from protoheme: step 1/1. In terms of biological role, converts heme B (protoheme IX) to heme O by substitution of the vinyl group on carbon 2 of heme B porphyrin ring with a hydroxyethyl farnesyl side group. In Prochlorococcus marinus (strain MIT 9515), this protein is Protoheme IX farnesyltransferase.